A 335-amino-acid polypeptide reads, in one-letter code: MASRKESAASGSNPLDFPVKQIQVDGLVVLKIIKHYQEEGQGSEVVQGVLLGLVVEDRLEITNCFPFPQHTEDDVEFDEVQYQMEMMRSLRHVNIDHLHVGWYQSTYYGSFVSRALLDSQFSYQHAIEESVVLIYDPLKTAQGSLCLKAYRLTPKLMEICKEKDFTPEGLKKAAVAYEHMFEEVPIFIKNSHLINVLMWDLQEKSTLADKHELLNLSSSNHLEKSLQLLMDRVDDMSQDIVKYNTYCRNLSKQQQQKQQYQQRRQQENAQRQSRGEPPLPEEDISKMFKAPQAPPRMDTLLIAGQINNYCQNIKEFTSQNLGKLFMAEALQSNSS.

The MPN domain occupies I22–L156. The segment covering Q254 to Q272 has biased composition (low complexity). The interval Q254–E282 is disordered.

The protein belongs to the eIF-3 subunit H family. Component of the eukaryotic translation initiation factor 3 (eIF-3) complex, which is composed of 13 subunits: eif3a, eif3b, eif3c, eif3d, eif3e, eif3f, eif3g, eif3h, eif3i, eif3j, eif3k, eif3l and eif3m.

The protein resides in the cytoplasm. In terms of biological role, component of the eukaryotic translation initiation factor 3 (eIF-3) complex, which is involved in protein synthesis of a specialized repertoire of mRNAs and, together with other initiation factors, stimulates binding of mRNA and methionyl-tRNAi to the 40S ribosome. The eIF-3 complex specifically targets and initiates translation of a subset of mRNAs involved in cell proliferation. The polypeptide is Eukaryotic translation initiation factor 3 subunit H-A (eif3ha) (Danio rerio (Zebrafish)).